The primary structure comprises 270 residues: Undecaprenyl-diphosphatase (270 aa).

The next 7 membrane-spanning stretches (helical) occupy residues 1 to 21 (MTWWEALLLGLIQGLTEFIPV), 92 to 112 (FRLGVFILVTLVPTGVAYVLF), 119 to 139 (AFGSPRFTSAMLVGTGVLLLL), 150 to 170 (LSGVKAFVVGVAQSCALVPGI), 193 to 213 (FSFLMLLPVVLGGTVLKGLEL), 223 to 243 (LSLGIGTVAAYGSGIGAIYVV), and 250 to 270 (GNLQYFAYYCFLIGGLGLWLL).

This sequence belongs to the UppP family.

Its subcellular location is the cell inner membrane. The enzyme catalyses di-trans,octa-cis-undecaprenyl diphosphate + H2O = di-trans,octa-cis-undecaprenyl phosphate + phosphate + H(+). In terms of biological role, catalyzes the dephosphorylation of undecaprenyl diphosphate (UPP). Confers resistance to bacitracin. The polypeptide is Undecaprenyl-diphosphatase (Salinibacter ruber (strain DSM 13855 / M31)).